A 148-amino-acid polypeptide reads, in one-letter code: Small ribosomal subunit protein bS6 (148 aa).

A disordered region spans residues 97 to 148 (EEGPSAMLQRRDDRERGDRGDRGPRRDFDDRGPRRPREDDRPRRSREDEGDE).

This sequence belongs to the bacterial ribosomal protein bS6 family.

Its function is as follows. Binds together with bS18 to 16S ribosomal RNA. This is Small ribosomal subunit protein bS6 from Chelativorans sp. (strain BNC1).